A 173-amino-acid chain; its full sequence is Pathogenesis-related protein 1C (173 aa).

The N-terminal stretch at 1 to 20 is a signal peptide; that stretch reads MSTSAVLFLLLAVFAAGASA.

It belongs to the thaumatin family.

This chain is Pathogenesis-related protein 1C, found in Hordeum vulgare (Barley).